The chain runs to 194 residues: Inosine triphosphate pyrophosphatase (194 aa).

An ITP-binding site is contributed by 10–15 (TGNANK). Glu41 serves as a coordination point for Mg(2+). ITP is bound by residues Lys54, 72–73 (DT), Lys89, 147–150 (FGWD), Lys172, and 177–178 (QR).

It belongs to the HAM1 NTPase family. As to quaternary structure, homodimer. The cofactor is Mg(2+). Requires Mn(2+) as cofactor.

Its subcellular location is the cytoplasm. The protein resides in the nucleus. The catalysed reaction is ITP + H2O = IMP + diphosphate + H(+). It catalyses the reaction dITP + H2O = dIMP + diphosphate + H(+). It carries out the reaction XTP + H2O = XMP + diphosphate + H(+). In terms of biological role, pyrophosphatase that hydrolyzes non-canonical purine nucleotides such as inosine triphosphate (ITP), deoxyinosine triphosphate (dITP) or xanthosine 5'-triphosphate (XTP) to their respective monophosphate derivatives. The enzyme does not distinguish between the deoxy- and ribose forms. Probably excludes non-canonical purines from RNA and DNA precursor pools, thus preventing their incorporation into RNA and DNA and avoiding chromosomal lesions. This is Inosine triphosphate pyrophosphatase from Kluyveromyces lactis (strain ATCC 8585 / CBS 2359 / DSM 70799 / NBRC 1267 / NRRL Y-1140 / WM37) (Yeast).